We begin with the raw amino-acid sequence, 378 residues long: MRVLGLISGTSADGIDVAIAEIQGFQADLSVALLAFETIAYEPSLRDRILEVAAGFPLSVAELTALDAAIAQAFATAAQTLIQQHGAVDLIGSHGQTVYHQPPQAGQLGWSVQLGWGAAIAQQTGITTVSNFRSADLALGGQGAPLVPAVDLWLLGSDSENRCVQNIGGIGNLTWLPRRDHPDWQSEVRGWDTGPGNSLLDLAVQKLSQGRLSYDDGGQWAATGQIDQVLCDRWLQEDDYFRLPPPKSTGRERYGWQFLETWAAELDRLTAADQLATLTEFTAASIVNNYRHFLPALPDRVLVCGGGLHNQFLLQRLQQQLPTVKIASTDDFGVNSQAKEAIAIAVLAYWRQHNVPGNLPAVTGASGPALLGDVFART.

9–16 (GTSADGID) contacts ATP.

Belongs to the anhydro-N-acetylmuramic acid kinase family.

The enzyme catalyses 1,6-anhydro-N-acetyl-beta-muramate + ATP + H2O = N-acetyl-D-muramate 6-phosphate + ADP + H(+). It participates in amino-sugar metabolism; 1,6-anhydro-N-acetylmuramate degradation. The protein operates within cell wall biogenesis; peptidoglycan recycling. Catalyzes the specific phosphorylation of 1,6-anhydro-N-acetylmuramic acid (anhMurNAc) with the simultaneous cleavage of the 1,6-anhydro ring, generating MurNAc-6-P. Is required for the utilization of anhMurNAc either imported from the medium or derived from its own cell wall murein, and thus plays a role in cell wall recycling. The polypeptide is Anhydro-N-acetylmuramic acid kinase (Synechococcus elongatus (strain ATCC 33912 / PCC 7942 / FACHB-805) (Anacystis nidulans R2)).